The following is a 292-amino-acid chain: 5,10-methylenetetrahydrofolate reductase (292 aa).

E26 (proton donor/acceptor) is an active-site residue. T57 contacts NADH. FAD contacts are provided by Y58, A60, H86, R116, G117, D118, A130, Y150, H154, A157, D163, N166, R169, and K170. D118 serves as a coordination point for (6S)-5-methyl-5,6,7,8-tetrahydrofolate. Q181 serves as a coordination point for NADH. The (6S)-5-methyl-5,6,7,8-tetrahydrofolate site is built by Q181, Q217, and R277.

Belongs to the methylenetetrahydrofolate reductase family. Requires FAD as cofactor.

It carries out the reaction (6S)-5-methyl-5,6,7,8-tetrahydrofolate + NAD(+) = (6R)-5,10-methylene-5,6,7,8-tetrahydrofolate + NADH + H(+). Its pathway is one-carbon metabolism; tetrahydrofolate interconversion. It participates in amino-acid biosynthesis; L-methionine biosynthesis via de novo pathway. Its function is as follows. Catalyzes the NADH-dependent reduction of 5,10-methylenetetrahydrofolate to 5-methyltetrahydrofolate. Is required to provide the methyl group necessary for methionine synthetase to convert homocysteine to methionine; the methyl group is given by 5-methyltetrahydrofolate. The chain is 5,10-methylenetetrahydrofolate reductase (metF) from Haemophilus influenzae (strain ATCC 51907 / DSM 11121 / KW20 / Rd).